Consider the following 193-residue polypeptide: Bcl-2-binding component 3 (193 aa).

Disordered stretches follow at residues 1 to 31 and 71 to 131; these read MARARQEGSSPEPVEGLARDSPRPFPLGRLM and ALGG…VEEE. Residue Ser-10 is modified to Phosphoserine. The BH3 signature appears at 137 to 151; the sequence is IGAQLRRMADDLNAQ.

Belongs to the Bcl-2 family. In terms of assembly, interacts with MCL1 and BCL2A1. Interacts with BCL2 and BCL2L1/BCL-XL. Interacts (via BH3 domain) with NOL3 (via CARD domain); this interaction prevents BBC3 association with BCL2 and results in CASP8 activation.

Its subcellular location is the mitochondrion. In terms of biological role, essential mediator of p53/TP53-dependent and p53/TP53-independent apoptosis. Promotes partial unfolding of BCL2L1 and dissociation of BCL2L1 from p53/TP53, releasing the bound p53/TP53 to induce apoptosis. Regulates ER stress-induced neuronal apoptosis. The chain is Bcl-2-binding component 3 (Bbc3) from Mus musculus (Mouse).